The chain runs to 64 residues: Large ribosomal subunit protein uL29 (64 aa).

It belongs to the universal ribosomal protein uL29 family.

In Ligilactobacillus salivarius (strain UCC118) (Lactobacillus salivarius), this protein is Large ribosomal subunit protein uL29.